A 1465-amino-acid polypeptide reads, in one-letter code: Myomesin-2 (1465 aa).

The disordered stretch occupies residues 38–61; it reads ASTQASSQKSLSQRSSSQRASSQT. Low complexity predominate over residues 41–61; the sequence is QASSQKSLSQRSSSQRASSQT. Ig-like C2-type domains are found at residues 154-245 and 266-371; these read PEIL…AAVV and PLSS…AFLF. Fibronectin type-III domains follow at residues 385–480, 513–608, 614–707, 710–812, and 815–912; these read APMD…ALDP, PPTG…AQDV, APGR…VQAA, VPSH…TMPE, and PAYD…ARPG. 3 Ig-like C2-type domains span residues 904–1002, 1130–1211, and 1345–1434; these read PVLV…EELE, PHFA…QDVS, and RLIG…VTVS. Residues 1442-1465 are disordered; the sequence is IPDMAPPQQAKPKLIPASASAAGQ.

Interacts with TTN/titin.

The protein resides in the cytoplasm. Its subcellular location is the myofibril. It is found in the sarcomere. The protein localises to the m line. Its function is as follows. Major component of the vertebrate myofibrillar M band. Binds myosin, titin, and light meromyosin. This binding is dose dependent. In Homo sapiens (Human), this protein is Myomesin-2 (MYOM2).